The primary structure comprises 367 residues: 4-hydroxyphenylpyruvate dioxygenase (367 aa).

VOC domains are found at residues 3–135 (GFDH…FVDR) and 166–324 (LIDH…IFTN). The Fe cation site is built by His-169, His-252, and Glu-335.

Belongs to the 4HPPD family. Requires Fe cation as cofactor.

The catalysed reaction is 3-(4-hydroxyphenyl)pyruvate + O2 = homogentisate + CO2. It participates in amino-acid degradation; L-phenylalanine degradation; acetoacetate and fumarate from L-phenylalanine: step 3/6. Key enzyme in the degradation of tyrosine. This chain is 4-hydroxyphenylpyruvate dioxygenase (hpd), found in Dictyostelium discoideum (Social amoeba).